The sequence spans 159 residues: Cyclic pyranopterin monophosphate synthase (159 aa).

Residues 75-77 (LCH) and 113-114 (ME) contribute to the substrate site. Residue Asp128 is part of the active site.

Belongs to the MoaC family. In terms of assembly, homohexamer; trimer of dimers.

The enzyme catalyses (8S)-3',8-cyclo-7,8-dihydroguanosine 5'-triphosphate = cyclic pyranopterin phosphate + diphosphate. It participates in cofactor biosynthesis; molybdopterin biosynthesis. Its function is as follows. Catalyzes the conversion of (8S)-3',8-cyclo-7,8-dihydroguanosine 5'-triphosphate to cyclic pyranopterin monophosphate (cPMP). The sequence is that of Cyclic pyranopterin monophosphate synthase from Yersinia pseudotuberculosis serotype IB (strain PB1/+).